Reading from the N-terminus, the 105-residue chain is Met repressor (105 aa).

The protein belongs to the MetJ family. In terms of assembly, homodimer.

The protein localises to the cytoplasm. Functionally, this regulatory protein, when combined with SAM (S-adenosylmethionine) represses the expression of the methionine regulon and of enzymes involved in SAM synthesis. The protein is Met repressor of Hamiltonella defensa subsp. Acyrthosiphon pisum (strain 5AT).